Consider the following 291-residue polypeptide: uncharacterized protein (291 aa).

Functionally, essential for virus function. This is an uncharacterized protein from Sulfolobus spindle-shape virus 1 (SSV1).